Consider the following 691-residue polypeptide: Putative calcium up-regulated protein I (691 aa).

The 128-residue stretch at 47–174 (SNCYLKEKPQ…NYTSQIWTYN (128 aa)) folds into the Ricin B-type lectin domain.

It belongs to the cup family.

This is Putative calcium up-regulated protein I (cupI) from Dictyostelium discoideum (Social amoeba).